A 439-amino-acid polypeptide reads, in one-letter code: CBL-interacting protein kinase 14 (439 aa).

The Protein kinase domain maps to 12 to 267 (YELGRLLGKG…IQKIKESTWF (256 aa)). ATP-binding positions include 18-26 (LGKGTFGKV) and lysine 41. Residue aspartate 135 is the Proton acceptor of the active site. The activation loop stretch occupies residues 153–182 (DFGLSALSESKRQDGLLHTTCGTPAYVAPE). An NAF domain is found at 298–333 (RKKNAHEDVKPMSVTNLNAFEIISFSKGFDLSGMFI). The tract at residues 338–367 (RNEARFTSDKSASTIISKLEDVAKALNLRV) is PPI.

Belongs to the protein kinase superfamily. CAMK Ser/Thr protein kinase family. SNF1 subfamily. Mn(2+) serves as cofactor.

The enzyme catalyses L-seryl-[protein] + ATP = O-phospho-L-seryl-[protein] + ADP + H(+). The catalysed reaction is L-threonyl-[protein] + ATP = O-phospho-L-threonyl-[protein] + ADP + H(+). CIPK serine-threonine protein kinases interact with CBL proteins. Binding of a CBL protein to the regulatory NAF domain of CIPK protein lead to the activation of the kinase in a calcium-dependent manner. This is CBL-interacting protein kinase 14 (CIPK14) from Oryza sativa subsp. japonica (Rice).